A 116-amino-acid polypeptide reads, in one-letter code: Staphylococcal complement inhibitor (116 aa).

An N-terminal signal peptide occupies residues 1–31; that stretch reads MKIRKSILAGTLAIVLASPLVTNLDKNEAQA. The segment at 62–79 is essential for activity; sequence LATGSLNTYYKRTIKISG.

Belongs to the SCIN family.

It is found in the secreted. Involved in countering the first line of host defense mechanisms. Efficiently inhibits opsonization, phagocytosis and killing of S.aureus by human neutrophils. Acts by binding and stabilizing human C3 convertases (C4b2a and C3bBb), leading to their inactivation. The convertases are no longer able to cleave complement C3, therefore preventing further C3b deposition on the bacterial surface and phagocytosis of the bacterium. Also prevents C5a-induced neutrophil responses. This chain is Staphylococcal complement inhibitor (scn), found in Staphylococcus aureus (strain N315).